Here is a 149-residue protein sequence, read N- to C-terminus: Deoxyuridine 5'-triphosphate nucleotidohydrolase (149 aa).

Residues 65 to 67, Asn78, 82 to 84, and Lys92 each bind substrate; these read RSG and TID.

The protein belongs to the dUTPase family. Requires Mg(2+) as cofactor.

It catalyses the reaction dUTP + H2O = dUMP + diphosphate + H(+). It functions in the pathway pyrimidine metabolism; dUMP biosynthesis; dUMP from dCTP (dUTP route): step 2/2. Functionally, this enzyme is involved in nucleotide metabolism: it produces dUMP, the immediate precursor of thymidine nucleotides and it decreases the intracellular concentration of dUTP so that uracil cannot be incorporated into DNA. The sequence is that of Deoxyuridine 5'-triphosphate nucleotidohydrolase from Chlorobium chlorochromatii (strain CaD3).